Reading from the N-terminus, the 79-residue chain is Large ribosomal subunit protein bL31 (79 aa).

This sequence belongs to the bacterial ribosomal protein bL31 family. Type A subfamily. In terms of assembly, part of the 50S ribosomal subunit.

Binds the 23S rRNA. This chain is Large ribosomal subunit protein bL31, found in Trichormus variabilis (strain ATCC 29413 / PCC 7937) (Anabaena variabilis).